The chain runs to 575 residues: Phosphoenolpyruvate-protein phosphotransferase (575 aa).

Residue His-189 is the Tele-phosphohistidine intermediate of the active site. 2 residues coordinate phosphoenolpyruvate: Arg-296 and Arg-332. Mg(2+)-binding residues include Glu-431 and Asp-455. Phosphoenolpyruvate is bound by residues 454–455 (ND) and Arg-465. Cys-502 serves as the catalytic Proton donor.

It belongs to the PEP-utilizing enzyme family. In terms of assembly, homodimer. The cofactor is Mg(2+).

The protein resides in the cytoplasm. The catalysed reaction is L-histidyl-[protein] + phosphoenolpyruvate = N(pros)-phospho-L-histidyl-[protein] + pyruvate. Functionally, general (non sugar-specific) component of the phosphoenolpyruvate-dependent sugar phosphotransferase system (sugar PTS). This major carbohydrate active-transport system catalyzes the phosphorylation of incoming sugar substrates concomitantly with their translocation across the cell membrane. Enzyme I transfers the phosphoryl group from phosphoenolpyruvate (PEP) to the phosphoryl carrier protein (HPr). The chain is Phosphoenolpyruvate-protein phosphotransferase (ptsI) from Haemophilus influenzae (strain ATCC 51907 / DSM 11121 / KW20 / Rd).